We begin with the raw amino-acid sequence, 607 residues long: V-type proton ATPase catalytic subunit A (607 aa).

246–253 serves as a coordination point for ATP; sequence GAFGCGKT.

It belongs to the ATPase alpha/beta chains family. As to quaternary structure, V-ATPase is a heteromultimeric enzyme composed of a peripheral catalytic V1 complex (components A to H) attached to an integral membrane V0 proton pore complex (components: a, c, c', c'', d, e, f and VOA1).

Its subcellular location is the vacuole membrane. The catalysed reaction is ATP + H2O + 4 H(+)(in) = ADP + phosphate + 5 H(+)(out). Catalytic subunit of the V1 complex of vacuolar(H+)-ATPase (V-ATPase), a multisubunit enzyme composed of a peripheral complex (V1) that hydrolyzes ATP and a membrane integral complex (V0) that translocates protons. V-ATPase is responsible for acidifying and maintaining the pH of intracellular compartments. In Neurospora crassa (strain ATCC 24698 / 74-OR23-1A / CBS 708.71 / DSM 1257 / FGSC 987), this protein is V-type proton ATPase catalytic subunit A (vma-1).